A 322-amino-acid chain; its full sequence is Acetyl-coenzyme A carboxylase carboxyl transferase subunit alpha (322 aa).

The 255-residue stretch at 43–297 (ALKSKSNALT…KEVLTQQLNK (255 aa)) folds into the CoA carboxyltransferase C-terminal domain.

The protein belongs to the AccA family. As to quaternary structure, acetyl-CoA carboxylase is a heterohexamer composed of biotin carboxyl carrier protein (AccB), biotin carboxylase (AccC) and two subunits each of ACCase subunit alpha (AccA) and ACCase subunit beta (AccD).

The protein resides in the cytoplasm. It catalyses the reaction N(6)-carboxybiotinyl-L-lysyl-[protein] + acetyl-CoA = N(6)-biotinyl-L-lysyl-[protein] + malonyl-CoA. It functions in the pathway lipid metabolism; malonyl-CoA biosynthesis; malonyl-CoA from acetyl-CoA: step 1/1. Component of the acetyl coenzyme A carboxylase (ACC) complex. First, biotin carboxylase catalyzes the carboxylation of biotin on its carrier protein (BCCP) and then the CO(2) group is transferred by the carboxyltransferase to acetyl-CoA to form malonyl-CoA. This chain is Acetyl-coenzyme A carboxylase carboxyl transferase subunit alpha, found in Vesicomyosocius okutanii subsp. Calyptogena okutanii (strain HA).